Reading from the N-terminus, the 2097-residue chain is SCAR-like protein 1 (2097 aa).

7 disordered regions span residues 205-227 (IANS…PRTT), 544-565 (AHSS…SIES), 1443-1467 (SQIA…PLSS), 1588-1616 (STEE…DPQK), 1730-1802 (QERV…EKTV), 1820-1842 (ASSH…PVTS), and 1893-1944 (YEGP…EGGY). Over residues 549 to 562 (KQSSQKSSGLDGSS) the composition is skewed to low complexity. Residues 1443–1454 (SQIASCSPTPSN) show a composition bias toward polar residues. Positions 1766-1794 (SISQQGLQGSVFPSDTSDNGEHSSYTSRA) are enriched in polar residues. Over residues 1908-1922 (YPHDDHNSEKEDIHQ) the composition is skewed to basic and acidic residues. One can recognise a WH2 domain in the interval 2028–2046 (ERNLLLEQIRNKTFNLKPV).

Belongs to the SCAR/WAVE family.

The protein localises to the cytoplasm. It is found in the cytoskeleton. Functionally, involved in regulation of actin and microtubule organization. Part of a WAVE complex that activates the Arp2/3 complex. The chain is SCAR-like protein 1 from Oryza sativa subsp. japonica (Rice).